The chain runs to 508 residues: MSQEKYIMAIDQGTTSSRAIIFNQKGEKVSSSQKEFPQIFPHAGWVEHNANQIWNSVQSVIAGAFIESSIKPSQIEAIGITNQRETTVVWDKKTGVPIYNAIVWQSRQTAPIAEQLKQDGHTKMIHEKTGLVIDAYFSATKIRWILDHVPGAQERAEKGELLFGTIDTWLVWKLTDGAVHVTDYSNAARTMLYNIKDLTWDDEILELLNIPKDMLPEVKSNSEIYGKTAAFHFYGGEVPISGMAGDQQAALFGQLAFEPGMVKNTYGTGSFIIMNTGDEMQLSSNNLLTTIGYGIGGKVHYALEGSIFIAGSAIQWLRDGLKMIETSPESEQFALASTSDDEVYVVPAFTGLGAPYWDSNARGSVFGLTRGTSKEDFVKATLQSIAYQVRDVIDTMQVDSGIDIQQLRVDGGAAMNNMLMQFQADILGIDIARAKNLETTALGAAFLAGLAVGYWEDMDALKELNATGQLFKASMNESRKEKLYKGWKRAVKATQVFTQEEDADDDAK.

Thr14 contacts ADP. 3 residues coordinate ATP: Thr14, Thr15, and Ser16. Position 14 (Thr14) interacts with sn-glycerol 3-phosphate. Arg18 is an ADP binding site. Sn-glycerol 3-phosphate-binding residues include Arg84, Glu85, and Tyr136. Positions 84, 85, and 136 each coordinate glycerol. Residue His232 is modified to Phosphohistidine; by HPr. Residue Asp246 participates in sn-glycerol 3-phosphate binding. Residues Asp246 and Gln247 each contribute to the glycerol site. ADP contacts are provided by Thr268 and Gly311. ATP-binding residues include Thr268, Gly311, Gln315, and Gly412. 2 residues coordinate ADP: Gly412 and Asn416.

It belongs to the FGGY kinase family. As to quaternary structure, homotetramer and homodimer (in equilibrium). The phosphoenolpyruvate-dependent sugar phosphotransferase system (PTS), including enzyme I, and histidine-containing protein (HPr) are required for the phosphorylation, which leads to the activation of the enzyme.

The catalysed reaction is glycerol + ATP = sn-glycerol 3-phosphate + ADP + H(+). It participates in polyol metabolism; glycerol degradation via glycerol kinase pathway; sn-glycerol 3-phosphate from glycerol: step 1/1. Its activity is regulated as follows. Activated by phosphorylation and inhibited by fructose 1,6-bisphosphate (FBP). Its function is as follows. Key enzyme in the regulation of glycerol uptake and metabolism. Catalyzes the phosphorylation of glycerol to yield sn-glycerol 3-phosphate. This is Glycerol kinase from Streptococcus pyogenes serotype M18 (strain MGAS8232).